The chain runs to 485 residues: Glutamyl-tRNA(Gln) amidotransferase subunit A (485 aa).

Catalysis depends on charge relay system residues Lys-79 and Ser-154. The active-site Acyl-ester intermediate is the Ser-178.

The protein belongs to the amidase family. GatA subfamily. Heterotrimer of A, B and C subunits.

The enzyme catalyses L-glutamyl-tRNA(Gln) + L-glutamine + ATP + H2O = L-glutaminyl-tRNA(Gln) + L-glutamate + ADP + phosphate + H(+). Its function is as follows. Allows the formation of correctly charged Gln-tRNA(Gln) through the transamidation of misacylated Glu-tRNA(Gln) in organisms which lack glutaminyl-tRNA synthetase. The reaction takes place in the presence of glutamine and ATP through an activated gamma-phospho-Glu-tRNA(Gln). This Staphylococcus aureus (strain Mu3 / ATCC 700698) protein is Glutamyl-tRNA(Gln) amidotransferase subunit A.